The chain runs to 79 residues: Small ribosomal subunit protein bS18 (79 aa).

The protein belongs to the bacterial ribosomal protein bS18 family. In terms of assembly, part of the 30S ribosomal subunit. Forms a tight heterodimer with protein bS6.

In terms of biological role, binds as a heterodimer with protein bS6 to the central domain of the 16S rRNA, where it helps stabilize the platform of the 30S subunit. This Streptococcus thermophilus (strain CNRZ 1066) protein is Small ribosomal subunit protein bS18.